A 90-amino-acid chain; its full sequence is MALDSAKKAEIVAKFAKKPGDTGSTEVQVALLTARIIELTEHLKIYKKDFSSRLGLLKLVGQRKRLLSYLKRKDYNSYSKLITELNLRDK.

The protein belongs to the universal ribosomal protein uS15 family. Part of the 30S ribosomal subunit. Forms a bridge to the 50S subunit in the 70S ribosome, contacting the 23S rRNA.

Functionally, one of the primary rRNA binding proteins, it binds directly to 16S rRNA where it helps nucleate assembly of the platform of the 30S subunit by binding and bridging several RNA helices of the 16S rRNA. Its function is as follows. Forms an intersubunit bridge (bridge B4) with the 23S rRNA of the 50S subunit in the ribosome. This is Small ribosomal subunit protein uS15 from Campylobacter jejuni subsp. doylei (strain ATCC BAA-1458 / RM4099 / 269.97).